Here is a 195-residue protein sequence, read N- to C-terminus: Imidazoleglycerol-phosphate dehydratase (195 aa).

This sequence belongs to the imidazoleglycerol-phosphate dehydratase family.

It localises to the cytoplasm. It carries out the reaction D-erythro-1-(imidazol-4-yl)glycerol 3-phosphate = 3-(imidazol-4-yl)-2-oxopropyl phosphate + H2O. It participates in amino-acid biosynthesis; L-histidine biosynthesis; L-histidine from 5-phospho-alpha-D-ribose 1-diphosphate: step 6/9. This chain is Imidazoleglycerol-phosphate dehydratase, found in Bordetella bronchiseptica (strain ATCC BAA-588 / NCTC 13252 / RB50) (Alcaligenes bronchisepticus).